The following is a 59-amino-acid chain: Embryonic testis differentiation protein (59 aa).

The segment at 1 to 28 is disordered; it reads MDEKNPEAVPRPPEQNTELVPPKKSKSK.

In terms of tissue distribution, specifically expressed in testis.

The sequence is that of Embryonic testis differentiation protein from Mus musculus (Mouse).